Reading from the N-terminus, the 551-residue chain is Structure-specific endonuclease subunit MUS81 (551 aa).

Basic and acidic residues predominate over residues histidine 84–proline 93. Residues histidine 84–tyrosine 130 form a disordered region. Residues serine 95 and serine 101 each carry the phosphoserine modification. Residues glycine 125–alanine 244 form an interaction with BLM region. Positions tryptophan 131 to glycine 230 are winged helix domain (WHD); critical for endonuclease activity. The ERCC4 domain maps to leucine 270–glycine 372. Active-site residues include aspartate 274, glutamate 277, and aspartate 307. Positions 274, 277, 307, 333, and 334 each coordinate Mg(2+). Positions valine 471–cysteine 545 are helix-hairpin-helix (2HhH); involved in DNA recognition and bending.

Belongs to the XPF family. Part of the heterodimeric DNA structure-specific endonuclease complex MUS81-EME1. Part of the heterodimeric DNA structure-specific endonuclease complex MUS81-EME2. Interacts with BLM; may stimulate the endonuclease activity of MUS81. Interacts with SLX4/BTBD12; this interaction is direct and links the MUS81-EME1 complex to SLX4, which may coordinate the action of the structure-specific endonuclease during DNA repair. Interacts with DCLRE1B/Apollo. Interacts with RECQL5; this interaction stimulates mitotic DNA synthesis. Interacts with CHEK2. The cofactor is Mg(2+). Widely expressed.

It is found in the nucleus. The protein localises to the nucleolus. Its function is as follows. Catalytic subunit of two functionally distinct, structure-specific, heterodimeric DNA endonucleases MUS81-EME1 and MUS81-EME2 that are involved in the maintenance of genome stability. Both endonucleases have essentially the same substrate specificity though MUS81-EME2 is more active than its MUS81-EME1 counterpart. Both cleave 3'-flaps and nicked Holliday junctions, and exhibit limited endonuclease activity with 5' flaps and nicked double-stranded DNAs. MUS81-EME2 which is active during the replication of DNA is more specifically involved in replication fork processing. Replication forks frequently encounter obstacles to their passage, including DNA base lesions, DNA interstrand cross-links, difficult-to-replicate sequences, transcription bubbles, or tightly bound proteins. One mechanism for the restart of a stalled replication fork involves nucleolytic cleavage mediated by the MUS81-EME2 endonuclease. By acting upon the stalled fork, MUS81-EME2 generates a DNA double-strand break (DSB) that can be repaired by homologous recombination, leading to the restoration of an active fork. MUS81-EME2 could also function in telomere maintenance. MUS81-EME1, on the other hand, is active later in the cell cycle and functions in the resolution of mitotic recombination intermediates including the Holliday junctions, the four-way DNA intermediates that form during homologous recombination. This chain is Structure-specific endonuclease subunit MUS81, found in Homo sapiens (Human).